The sequence spans 125 residues: Probable mercury resistance operon repressor (125 aa).

Residues 15–109 (VPCTHPDTTA…LARCLAADNA (95 aa)) form the HTH arsR-type domain. The segment at residues 49 to 68 (SAECVEHAGISQPRVSVHLS) is a DNA-binding region (H-T-H motif). Residues Cys-69, Cys-73, and Cys-114 each coordinate Hg(2+).

Its function is as follows. Negatively regulates the mercuric reductase merA and the organolyase merB in the absence of mercuric ions. The polypeptide is Probable mercury resistance operon repressor (merR) (Streptomyces lividans).